We begin with the raw amino-acid sequence, 100 residues long: Small ribosomal subunit protein bS20 (100 aa).

Residues 79-100 (AAHQKSRLSAAVKQAIEPAPST) form a disordered region.

This sequence belongs to the bacterial ribosomal protein bS20 family.

In terms of biological role, binds directly to 16S ribosomal RNA. This chain is Small ribosomal subunit protein bS20, found in Prochlorococcus marinus (strain MIT 9303).